The chain runs to 61 residues: MAKKSMMIKAARSNKFKVRKYNRCPLCGRPRAYYRKFDMCRICLRKLALEGKLPGVIKSSW.

The Zn(2+) site is built by Cys24, Cys27, Cys40, and Cys43.

It belongs to the universal ribosomal protein uS14 family. Zinc-binding uS14 subfamily. As to quaternary structure, part of the 30S ribosomal subunit. Contacts proteins S3 and S10. Requires Zn(2+) as cofactor.

Binds 16S rRNA, required for the assembly of 30S particles and may also be responsible for determining the conformation of the 16S rRNA at the A site. The protein is Small ribosomal subunit protein uS14 of Syntrophotalea carbinolica (strain DSM 2380 / NBRC 103641 / GraBd1) (Pelobacter carbinolicus).